The primary structure comprises 511 residues: Bifunctional purine biosynthesis protein PurH (511 aa).

One can recognise an MGS-like domain in the interval 1-145 (MKKRALVSVS…KNHKFVSVIV (145 aa)).

Belongs to the PurH family.

It carries out the reaction (6R)-10-formyltetrahydrofolate + 5-amino-1-(5-phospho-beta-D-ribosyl)imidazole-4-carboxamide = 5-formamido-1-(5-phospho-D-ribosyl)imidazole-4-carboxamide + (6S)-5,6,7,8-tetrahydrofolate. The enzyme catalyses IMP + H2O = 5-formamido-1-(5-phospho-D-ribosyl)imidazole-4-carboxamide. The protein operates within purine metabolism; IMP biosynthesis via de novo pathway; 5-formamido-1-(5-phospho-D-ribosyl)imidazole-4-carboxamide from 5-amino-1-(5-phospho-D-ribosyl)imidazole-4-carboxamide (10-formyl THF route): step 1/1. It participates in purine metabolism; IMP biosynthesis via de novo pathway; IMP from 5-formamido-1-(5-phospho-D-ribosyl)imidazole-4-carboxamide: step 1/1. The protein is Bifunctional purine biosynthesis protein PurH of Bacillus anthracis (strain A0248).